Reading from the N-terminus, the 175-residue chain is Methylmalonyl-CoA epimerase, mitochondrial (175 aa).

Residues 1–35 (MARVLKVAAASAAGLFPRLRTPVSTVRTSASLSSH) constitute a mitochondrion transit peptide. A VOC domain is found at 46 to 175 (RLNHVAVAVP…GGVLVELEQA (130 aa)). Residue H49 participates in Co(2+) binding. K113 is modified (N6-succinyllysine). Residue H121 participates in Co(2+) binding. K149 is subject to N6-acetyllysine; alternate. K149 bears the N6-succinyllysine; alternate mark. E171 is a Co(2+) binding site.

It belongs to the methylmalonyl-CoA epimerase family.

It localises to the mitochondrion. It catalyses the reaction (R)-methylmalonyl-CoA = (S)-methylmalonyl-CoA. Functionally, methylmalonyl-CoA epimerase involved in propionyl-CoA metabolism. In Bos taurus (Bovine), this protein is Methylmalonyl-CoA epimerase, mitochondrial (MCEE).